The following is a 510-amino-acid chain: MVETVGGKDAVAPAPARSPSPPAKNLDPLNPLLPAYHFVGIGGVGMSALAYILAKQGFRVSGSDIAANGRTRRLEALGVRFIQGHTLEGLAGDPQVVYSSAIRPTNPELAAALDKGLKVWHRADLLAALFNHRPSIGVAGTHGKTTTSSMIGYMLLAAGWDPTLIIGGEMDAWDGNARLGQGEYLVAEVDESDGSLVRLYPQIGVITNIELDHPDHYANLEQVIRAFQQYGQQSQTLVACLDCPNVATHLKVDIGYSLAGHPQAQYQARQILYTADCTSAEIWERGSLLGQLRLQVLGSHNLSNALAAVAVGRQLGLEFAVIASALAEFRGVQRRFEVKGEVGGVTFIDDYAHHPSEIRATLRAARLQQRRVVAVFQPHRHSRLAKLFQDFACCFADAQVVVIVPTYGAGEAAPEGSDSLRLAVSVAEHHPHVRYVSSLPQLPQVLPSILQPGDLAIFLGAGDLNQQIAATMRAYAARLGEQPLANFEGKLPGQAEDGIREMGASEVLAS.

The interval 1-25 is disordered; it reads MVETVGGKDAVAPAPARSPSPPAKN. 140 to 146 provides a ligand contact to ATP; it reads GTHGKTT.

Belongs to the MurCDEF family.

It localises to the cytoplasm. It carries out the reaction UDP-N-acetyl-alpha-D-muramate + L-alanine + ATP = UDP-N-acetyl-alpha-D-muramoyl-L-alanine + ADP + phosphate + H(+). It participates in cell wall biogenesis; peptidoglycan biosynthesis. Functionally, cell wall formation. The polypeptide is UDP-N-acetylmuramate--L-alanine ligase (Synechococcus sp. (strain JA-3-3Ab) (Cyanobacteria bacterium Yellowstone A-Prime)).